A 35-amino-acid polypeptide reads, in one-letter code: uncharacterized protein (35 aa).

Residues 1 to 25 (MTERKLLQLLRRPFISLSLFTALRA) form the signal peptide.

This is an uncharacterized protein from Saccharomyces cerevisiae (strain ATCC 204508 / S288c) (Baker's yeast).